We begin with the raw amino-acid sequence, 306 residues long: GTP-binding protein RAD (306 aa).

The segment covering 1-13 has biased composition (gly residues); the sequence is MTLNGGSGAGGSR. The interval 1 to 91 is disordered; it reads MTLNGGSGAG…GDSGSEDGVY (91 aa). Arg23 bears the Omega-N-methylarginine mark. The residue at position 25 (Ser25) is a Phosphoserine. A compositionally biased stretch (low complexity) spans 56–88; it reads AATAAGTRTQGQRLDWPEGSSDSLSSGDSGSED. GTP contacts are provided by residues 97 to 104 and 201 to 204; these read GAPGVGKS and NKSD. Positions 276 to 295 are calmodulin-binding; that stretch reads AKLFLGRIVARNSRKMAFLA.

It belongs to the small GTPase superfamily. RGK family. In terms of assembly, interacts with Calmodulin preferentially in the inactive, GDP-bound form. Interacts with CAMK2D. Interacts with CACNB2; interaction may be involved in beta-adrenergic regulation of heart rate and contractile force. Interaction with CACNB2 regulates the trafficking of CACNA1C to the cell membrane.

The protein localises to the cell membrane. In terms of biological role, may regulate basal voltage-dependent L-type Ca(2+) currents and be required for beta-adrenergic augmentation of Ca(2+) influx in cardiomyocytes, thereby regulating increases in heart rate and contractile force. May play an important role in cardiac antiarrhythmia via the strong suppression of voltage-dependent L-type Ca(2+) currents. Regulates voltage-gated L-type calcium channel subunit alpha-1C trafficking to the cell membrane. Inhibits cardiac hypertrophy through the calmodulin-dependent kinase II (CaMKII) pathway. Inhibits phosphorylation and activation of CAMK2D. This is GTP-binding protein RAD (Rrad) from Rattus norvegicus (Rat).